A 189-amino-acid polypeptide reads, in one-letter code: NADH-quinone oxidoreductase subunit B (189 aa).

[4Fe-4S] cluster-binding residues include Cys-39, Cys-40, Cys-104, and Cys-135.

The protein belongs to the complex I 20 kDa subunit family. NDH-1 is composed of 14 different subunits. Subunits NuoB, C, D, E, F, and G constitute the peripheral sector of the complex. The cofactor is [4Fe-4S] cluster.

It localises to the cell inner membrane. The catalysed reaction is a quinone + NADH + 5 H(+)(in) = a quinol + NAD(+) + 4 H(+)(out). In terms of biological role, NDH-1 shuttles electrons from NADH, via FMN and iron-sulfur (Fe-S) centers, to quinones in the respiratory chain. The immediate electron acceptor for the enzyme in this species is believed to be a menaquinone. Couples the redox reaction to proton translocation (for every two electrons transferred, four hydrogen ions are translocated across the cytoplasmic membrane), and thus conserves the redox energy in a proton gradient. The protein is NADH-quinone oxidoreductase subunit B of Pelodictyon phaeoclathratiforme (strain DSM 5477 / BU-1).